The chain runs to 309 residues: tRNA dimethylallyltransferase 1 (309 aa).

14-21 (GPTASGKS) contributes to the ATP binding site. 16-21 (TASGKS) is a binding site for substrate. Residues 39–42 (DSMQ) are interaction with substrate tRNA.

The protein belongs to the IPP transferase family. As to quaternary structure, monomer. Requires Mg(2+) as cofactor.

It carries out the reaction adenosine(37) in tRNA + dimethylallyl diphosphate = N(6)-dimethylallyladenosine(37) in tRNA + diphosphate. Functionally, catalyzes the transfer of a dimethylallyl group onto the adenine at position 37 in tRNAs that read codons beginning with uridine, leading to the formation of N6-(dimethylallyl)adenosine (i(6)A). In Pelobacter propionicus (strain DSM 2379 / NBRC 103807 / OttBd1), this protein is tRNA dimethylallyltransferase 1.